The chain runs to 1332 residues: Abscisic-aldehyde oxidase (1332 aa).

The 2Fe-2S ferredoxin-type domain occupies 1–88 (MDLEFAVNGE…GCSITTSEGL (88 aa)). [2Fe-2S] cluster is bound by residues cysteine 40, cysteine 45, and cysteine 48. Residues 219–400 (SDHLKYRWTT…LKVEIPSWTA (182 aa)) form the FAD-binding PCMH-type domain.

This sequence belongs to the xanthine dehydrogenase family. As to quaternary structure, aldehyde oxidases (AO) are homodimers and heterodimers of AO subunits. AO-delta is a AAO3 homodimer. AAO3 also forms a dimer with AAO2. Interacts with PUB44, and this interaction probably results in targeting of this protein to the proteasome. [2Fe-2S] cluster serves as cofactor. It depends on FAD as a cofactor. Mo-molybdopterin is required as a cofactor. In terms of tissue distribution, expressed in vascular tissues of all organs, particularly in phloem companion cells and xylem parenchymatic cells. Highly expressed in roots and rosettes, and to lower extent in seedlings, stems and flowers. Expressed at very low levels in siliques and dry seeds. Also detected in root dividing cells (tips and primordia), in mesophyll cells and inside the guard cells.

It is found in the cytoplasm. It catalyses the reaction 2-cis-(+)-abscisic aldehyde + O2 + H2O = 2-cis-(+)-abscisate + H2O2 + H(+). The enzyme catalyses 1-naphthaldehyde + O2 + H2O = 1-naphthoate + H2O2 + H(+). It carries out the reaction indole-3-acetaldehyde + O2 + H2O = (indol-3-yl)acetate + H2O2 + H(+). Functionally, in higher plants aldehyde oxidases (AO) appear to be homo- and heterodimeric assemblies of AO subunits with probably different physiological functions. AO-delta may be involved in the last step of abscisic acid biosynthesis, at least in leaves and seeds. In vitro, AO-delta oxidizes abscisic aldehyde to abscisic acid (ABA). In vitro, AO-delta also uses 1-naphthaldehyde, indole-3-aldehyde (IAld), benzaldehyde and cinnamaldehyde as substrate; the AAO2-AAO3 dimer also uses abscisic aldehyde as substrate. The protein is Abscisic-aldehyde oxidase (AAO3) of Arabidopsis thaliana (Mouse-ear cress).